Reading from the N-terminus, the 139-residue chain is uncharacterized protein (139 aa).

This is an uncharacterized protein from Invertebrate iridescent virus 6 (IIV-6).